The chain runs to 191 residues: Large ribosomal subunit protein uL6A (191 aa).

Belongs to the universal ribosomal protein uL6 family. As to quaternary structure, component of the large ribosomal subunit (LSU). Mature yeast ribosomes consist of a small (40S) and a large (60S) subunit. The 40S small subunit contains 1 molecule of ribosomal RNA (18S rRNA) and 33 different proteins (encoded by 57 genes). The large 60S subunit contains 3 rRNA molecules (25S, 5.8S and 5S rRNA) and 46 different proteins (encoded by 81 genes). uL6 lines the binding pocket for eukaryotic elongation factor 2 (eEF2).

Its subcellular location is the cytoplasm. Component of the ribosome, a large ribonucleoprotein complex responsible for the synthesis of proteins in the cell. The small ribosomal subunit (SSU) binds messenger RNAs (mRNAs) and translates the encoded message by selecting cognate aminoacyl-transfer RNA (tRNA) molecules. The large subunit (LSU) contains the ribosomal catalytic site termed the peptidyl transferase center (PTC), which catalyzes the formation of peptide bonds, thereby polymerizing the amino acids delivered by tRNAs into a polypeptide chain. The nascent polypeptides leave the ribosome through a tunnel in the LSU and interact with protein factors that function in enzymatic processing, targeting, and the membrane insertion of nascent chains at the exit of the ribosomal tunnel. In Saccharomyces cerevisiae (strain ATCC 204508 / S288c) (Baker's yeast), this protein is Large ribosomal subunit protein uL6A.